The primary structure comprises 545 residues: uncharacterized protein (545 aa).

Basic and acidic residues-rich tracts occupy residues 34–44 (PMNKQNEKLKT) and 53–63 (PRNDYSRRVSR). 3 disordered regions span residues 34–98 (PMNK…PESN), 269–296 (QNGTAGYSNSRKTSSPSYHKQSIPPQDS), and 415–444 (ERPQRKTEHVKTPEENLQTKNPTTMTSAPE). Residues 69-78 (TDSSEQQITA) are compositionally biased toward polar residues. Basic and acidic residues predominate over residues 415–428 (ERPQRKTEHVKTPE). A compositionally biased stretch (polar residues) spans 429–441 (ENLQTKNPTTMTS).

This is an uncharacterized protein from Mus musculus (Mouse).